We begin with the raw amino-acid sequence, 101 residues long: Putative pterin-4-alpha-carbinolamine dehydratase (101 aa).

This sequence belongs to the pterin-4-alpha-carbinolamine dehydratase family.

It carries out the reaction (4aS,6R)-4a-hydroxy-L-erythro-5,6,7,8-tetrahydrobiopterin = (6R)-L-erythro-6,7-dihydrobiopterin + H2O. The protein is Putative pterin-4-alpha-carbinolamine dehydratase of Rhizobium etli (strain ATCC 51251 / DSM 11541 / JCM 21823 / NBRC 15573 / CFN 42).